Consider the following 338-residue polypeptide: MTAPEGTLESFLEGDCSVSEPLAITVTALAFVAETLAGVISSGPLNGRLGEEVGANSDGDRQKKLDVVADELFAGALAPTPVRWYASEERPTAEMLNPEGTLALAIDPLDGSSNIDVNISIGTIFSVFEAKESGVESFLRPGREQIAAGYVVYGPQTVFILATRTTLAQFVLHRGHFFLVSDSLRIPDRTTEFAINASNYRHWSRPIRAFVDDCIAGDEGPWGENFNMRWVASLVAETHRILTRGGIFLYPADARRGYGQGRLRLVYECAPIAFIVERAGGKATDGIDRILDLTPSELHQRTPLVFGTAEKVSQVCAYHDLPESEVSPLFGTRGLFRA.

Residues E88, D107, L109, and D110 each contribute to the Mg(2+) site. Substrate is bound by residues 110–113 (DGSS) and N196. A Mg(2+)-binding site is contributed by E268.

This sequence belongs to the FBPase class 1 family. In terms of assembly, homotetramer. The cofactor is Mg(2+).

It is found in the cytoplasm. It carries out the reaction beta-D-fructose 1,6-bisphosphate + H2O = beta-D-fructose 6-phosphate + phosphate. It functions in the pathway carbohydrate biosynthesis; Calvin cycle. This is Fructose-1,6-bisphosphatase class 1 1 from Bradyrhizobium sp. (strain BTAi1 / ATCC BAA-1182).